We begin with the raw amino-acid sequence, 108 residues long: Evasin P1127 (108 aa).

The N-terminal stretch at 1–28 (MEAKTFAFLEIAMFIALGIQTFVAVTDA) is a signal peptide. Cystine bridges form between C41-C63, C45-C65, and C56-C76. N44 carries an N-linked (GlcNAc...) asparagine glycan. N89 is a glycosylation site (N-linked (GlcNAc...) asparagine).

Its subcellular location is the secreted. Salivary chemokine-binding protein which binds to host chemokines CXCL1, CXCL2, CXCL3, CXCL5 and CXCL8. The protein is Evasin P1127 of Ixodes ricinus (Common tick).